A 364-amino-acid polypeptide reads, in one-letter code: MPHSYPALSAEQKKELSDIALRIVAPGKGILAADESVGSMAKRLSQIGVENTEENRRLYRQVLFSADDRVKKCIGGVIFFHETLYQKDDNGVPFIRTILDKGIVVGIKVDKGVVPLAGTDGETTTQGLDGLSERCAQYKKDGADFAKWRCVLKISERTPSALAILENANVLARYASICQQNGIVPIVEPEILPDGDHDLKRCQYVTEKVLAAVYKALSDHHVYLEGTLLKPNMVTPGHACPIKYTPEEIAMATVTALRRTVPPAVPGVTFLSGGQSEEEASFNLNAINRCPLPRPWALTFSYGRALQASALNAWRGQRDNAEAATEEFIKRAEVNGLAAQGKYEGSGEDGGAAAQSLYIANHAY.

Position 5 is a phosphotyrosine (Tyr5). A phosphoserine mark is found at Ser36, Ser39, and Ser45. Position 56 (Arg56) interacts with substrate. An N6-acetyllysine modification is found at Lys111. Phosphoserine is present on Ser132. Lys147 contributes to the substrate binding site. The active-site Proton acceptor is the Glu188. The active-site Schiff-base intermediate with dihydroxyacetone-P is the Lys230.

It belongs to the class I fructose-bisphosphate aldolase family. As to quaternary structure, homotetramer. Interacts with ATP6V1E1.

The catalysed reaction is beta-D-fructose 1,6-bisphosphate = D-glyceraldehyde 3-phosphate + dihydroxyacetone phosphate. The protein operates within carbohydrate degradation; glycolysis; D-glyceraldehyde 3-phosphate and glycerone phosphate from D-glucose: step 4/4. The chain is Fructose-bisphosphate aldolase C (ALDOC) from Pan troglodytes (Chimpanzee).